The sequence spans 342 residues: tRNA N6-adenosine threonylcarbamoyltransferase (342 aa).

Positions 111 and 115 each coordinate Fe cation. Substrate is bound by residues 134–138 (LVSGG), Asp-167, Gly-180, and Asn-277. A Fe cation-binding site is contributed by Asp-305.

This sequence belongs to the KAE1 / TsaD family. The cofactor is Fe(2+).

Its subcellular location is the cytoplasm. The catalysed reaction is L-threonylcarbamoyladenylate + adenosine(37) in tRNA = N(6)-L-threonylcarbamoyladenosine(37) in tRNA + AMP + H(+). Its function is as follows. Required for the formation of a threonylcarbamoyl group on adenosine at position 37 (t(6)A37) in tRNAs that read codons beginning with adenine. Is involved in the transfer of the threonylcarbamoyl moiety of threonylcarbamoyl-AMP (TC-AMP) to the N6 group of A37, together with TsaE and TsaB. TsaD likely plays a direct catalytic role in this reaction. The polypeptide is tRNA N6-adenosine threonylcarbamoyltransferase (Haemophilus influenzae (strain ATCC 51907 / DSM 11121 / KW20 / Rd)).